The sequence spans 114 residues: Large ribosomal subunit protein bL19 (114 aa).

This sequence belongs to the bacterial ribosomal protein bL19 family.

Functionally, this protein is located at the 30S-50S ribosomal subunit interface and may play a role in the structure and function of the aminoacyl-tRNA binding site. The polypeptide is Large ribosomal subunit protein bL19 (Thermoanaerobacter sp. (strain X514)).